A 428-amino-acid polypeptide reads, in one-letter code: Adenylosuccinate synthetase (428 aa).

GTP-binding positions include 12-18 and 40-42; these read GDEGKGK and GHT. Asp-13 acts as the Proton acceptor in catalysis. 2 residues coordinate Mg(2+): Asp-13 and Gly-40. IMP is bound by residues 13–16, 38–41, Thr-129, Arg-143, Gln-224, Thr-239, and Arg-303; these read DEGK and NAGH. His-41 serves as the catalytic Proton donor. 299 to 305 provides a ligand contact to substrate; that stretch reads VTTGRIR. GTP is bound by residues Arg-305, 331–333, and 410–412; these read KVD and AYG.

Belongs to the adenylosuccinate synthetase family. In terms of assembly, homodimer. Mg(2+) serves as cofactor.

Its subcellular location is the cytoplasm. It carries out the reaction IMP + L-aspartate + GTP = N(6)-(1,2-dicarboxyethyl)-AMP + GDP + phosphate + 2 H(+). It participates in purine metabolism; AMP biosynthesis via de novo pathway; AMP from IMP: step 1/2. Its function is as follows. Plays an important role in the de novo pathway of purine nucleotide biosynthesis. Catalyzes the first committed step in the biosynthesis of AMP from IMP. The polypeptide is Adenylosuccinate synthetase (Francisella tularensis subsp. mediasiatica (strain FSC147)).